The sequence spans 116 residues: MIDAIKNVSSLSATRGLGSIATDLSSAASNAIASTPETAIGSSAVGSFASVMSDVAKNTVSTLKEAENASFAGIKGTMSTREVVDKVMQADQTLQTAIALRDKMVSAFLDITKMQI.

It belongs to the FliE family.

It localises to the bacterial flagellum basal body. This chain is Flagellar hook-basal body complex protein FliE, found in Rhizobium rhizogenes (strain K84 / ATCC BAA-868) (Agrobacterium radiobacter).